We begin with the raw amino-acid sequence, 372 residues long: Anhydro-N-acetylmuramic acid kinase (372 aa).

14–21 (GTSLDGVD) contacts ATP.

The protein belongs to the anhydro-N-acetylmuramic acid kinase family.

It carries out the reaction 1,6-anhydro-N-acetyl-beta-muramate + ATP + H2O = N-acetyl-D-muramate 6-phosphate + ADP + H(+). It functions in the pathway amino-sugar metabolism; 1,6-anhydro-N-acetylmuramate degradation. The protein operates within cell wall biogenesis; peptidoglycan recycling. Catalyzes the specific phosphorylation of 1,6-anhydro-N-acetylmuramic acid (anhMurNAc) with the simultaneous cleavage of the 1,6-anhydro ring, generating MurNAc-6-P. Is required for the utilization of anhMurNAc either imported from the medium or derived from its own cell wall murein, and thus plays a role in cell wall recycling. This is Anhydro-N-acetylmuramic acid kinase from Photorhabdus laumondii subsp. laumondii (strain DSM 15139 / CIP 105565 / TT01) (Photorhabdus luminescens subsp. laumondii).